The primary structure comprises 457 residues: Siroheme synthase (457 aa).

The tract at residues M1–T204 is precorrin-2 dehydrogenase /sirohydrochlorin ferrochelatase. NAD(+) is bound by residues D22 to V23 and L43 to A44. S128 carries the phosphoserine modification. The tract at residues G216 to H457 is uroporphyrinogen-III C-methyltransferase. P225 is a binding site for S-adenosyl-L-methionine. The Proton acceptor role is filled by D248. The active-site Proton donor is K270. Residues G301–D303, I306, T331–A332, M382, and G411 each bind S-adenosyl-L-methionine.

The protein in the N-terminal section; belongs to the precorrin-2 dehydrogenase / sirohydrochlorin ferrochelatase family. This sequence in the C-terminal section; belongs to the precorrin methyltransferase family.

It catalyses the reaction uroporphyrinogen III + 2 S-adenosyl-L-methionine = precorrin-2 + 2 S-adenosyl-L-homocysteine + H(+). The catalysed reaction is precorrin-2 + NAD(+) = sirohydrochlorin + NADH + 2 H(+). The enzyme catalyses siroheme + 2 H(+) = sirohydrochlorin + Fe(2+). It participates in cofactor biosynthesis; adenosylcobalamin biosynthesis; precorrin-2 from uroporphyrinogen III: step 1/1. The protein operates within cofactor biosynthesis; adenosylcobalamin biosynthesis; sirohydrochlorin from precorrin-2: step 1/1. Its pathway is porphyrin-containing compound metabolism; siroheme biosynthesis; precorrin-2 from uroporphyrinogen III: step 1/1. It functions in the pathway porphyrin-containing compound metabolism; siroheme biosynthesis; siroheme from sirohydrochlorin: step 1/1. It participates in porphyrin-containing compound metabolism; siroheme biosynthesis; sirohydrochlorin from precorrin-2: step 1/1. Multifunctional enzyme that catalyzes the SAM-dependent methylations of uroporphyrinogen III at position C-2 and C-7 to form precorrin-2 via precorrin-1. Then it catalyzes the NAD-dependent ring dehydrogenation of precorrin-2 to yield sirohydrochlorin. Finally, it catalyzes the ferrochelation of sirohydrochlorin to yield siroheme. The sequence is that of Siroheme synthase from Escherichia coli O81 (strain ED1a).